A 264-amino-acid polypeptide reads, in one-letter code: Indole-3-glycerol phosphate synthase (264 aa).

It belongs to the TrpC family.

The enzyme catalyses 1-(2-carboxyphenylamino)-1-deoxy-D-ribulose 5-phosphate + H(+) = (1S,2R)-1-C-(indol-3-yl)glycerol 3-phosphate + CO2 + H2O. It participates in amino-acid biosynthesis; L-tryptophan biosynthesis; L-tryptophan from chorismate: step 4/5. In Azoarcus sp. (strain BH72), this protein is Indole-3-glycerol phosphate synthase.